The primary structure comprises 421 residues: Vasopressin V1b receptor (421 aa).

Residues 1–35 are Extracellular-facing; it reads MDSEPSWTATPSPGGTLFVPNTTTPWLGRDEELAK. N21 is a glycosylation site (N-linked (GlcNAc...) asparagine). The chain crosses the membrane as a helical span at residues 36–59; that stretch reads VEIGILATVLVLATGGNLAVLLIL. Topologically, residues 60 to 71 are cytoplasmic; sequence GLQGHKRSRMHL. A helical transmembrane segment spans residues 72–93; it reads FVLHLALTDLGVALFQVLPQLL. Topologically, residues 94–108 are extracellular; sequence WDITYRFQGSDLLCR. A disulfide bond links C107 and C186. The helical transmembrane segment at 109–130 threads the bilayer; sequence AVKYLQVLSMFASTYMLLAMTL. Topologically, residues 131 to 151 are cytoplasmic; it reads DRYLAVCHPLRSLQQPSQSTY. Residues 152–173 traverse the membrane as a helical segment; the sequence is PLIAAPWLLAAILSLPQVFIFS. Over 174-202 the chain is Extracellular; it reads LREVIQGSGVLDCWADFYFSWGPRAYITW. Residues 203–223 traverse the membrane as a helical segment; sequence TTMAIFVLPVVVLTACYGLIC. The Cytoplasmic segment spans residues 224 to 280; that stretch reads HEIYKNLKVKTQAGREERRGWPKSSSSAAAAATRGLPSRVSSISTISRAKIRTVKMT. Residues 281–300 form a helical membrane-spanning segment; it reads FVIVLAYIACWAPFFSVQMW. Residues 301–318 lie on the Extracellular side of the membrane; sequence SVWDENAPNEDSTNVAFT. Residues 319-338 traverse the membrane as a helical segment; that stretch reads ISMLLGNLSSCCNPWIYMGF. The Cytoplasmic portion of the chain corresponds to 339–421; it reads NSHLLPRSLS…GEATMETSIS (83 aa). Residues 399 to 421 form a disordered region; it reads KPAGSLKDLEQVDGEATMETSIS.

This sequence belongs to the G-protein coupled receptor 1 family. Vasopressin/oxytocin receptor subfamily.

It localises to the cell membrane. Receptor for arginine vasopressin. The activity of this receptor is mediated by G proteins which activate a phosphatidyl-inositol-calcium second messenger system. This Mus musculus (Mouse) protein is Vasopressin V1b receptor (Avpr1b).